The sequence spans 352 residues: C-X-C chemokine receptor type 4 (352 aa).

Residues 1–21 (MEGISIYTSDNYTEEMGSGDY) are important for chemokine binding and signaling. Over 1–38 (MEGISIYTSDNYTEEMGSGDYDSIKEPCFREENAHFNR) the chain is Extracellular. Sulfotyrosine is present on Y7. An N-linked (GlcNAc...) asparagine glycan is attached at N11. The residue at position 12 (Y12) is a Sulfotyrosine. O-linked (Xyl...) (chondroitin sulfate) serine glycosylation occurs at S18. Residue Y21 is modified to Sulfotyrosine. Disulfide bonds link C28/C274 and C109/C186. A helical transmembrane segment spans residues 39–63 (IFLPTIYSIIFLTGIVGNGLVILVM). The Cytoplasmic portion of the chain corresponds to 64–77 (GYQKKLRSMTDKYR). A helical transmembrane segment spans residues 78–99 (LHLSVADLLFVITLPFWAVDAV). The chemokine binding stretch occupies residues 94-97 (WAVD). Over 100 to 110 (ANWYFGNFLCK) the chain is Extracellular. The helical transmembrane segment at 111-130 (AVHVIYTVNLYSSVLILAFI) threads the bilayer. The interval 113–117 (HVIYT) is chemokine binding. The Cytoplasmic segment spans residues 131–154 (SLDRYLAIVHATNSQKPRKLLAEK). The short motif at 133–135 (DRY) is the Important for signaling element. The interval 135-147 (YLAIVHATNSQKP) is involved in dimerization; when bound to chemokine. Residues 155–174 (VVYVGVWIPALLLTIPDFIF) form a helical membrane-spanning segment. Topologically, residues 175–195 (ASVSEADDRYICDRFYPNDLW) are extracellular. The chemokine binding, important for signaling stretch occupies residues 186 to 190 (CDRFY). The involved in dimerization stretch occupies residues 191-210 (PNDLWVVVFQFQHIMVGLIL). Residues 196–216 (VVVFQFQHIMVGLILPGIDIL) form a helical membrane-spanning segment. Over 217-241 (SCYCIIISKLSHSKGHQKRKALKTT) the chain is Cytoplasmic. Residues 242–261 (VILILAFFACWLPYYIGISI) traverse the membrane as a helical segment. Over 262–282 (DSFILLEIIKQGCEFENTVHK) the chain is Extracellular. Residues 266–268 (LLE) form an involved in dimerization region. The chain crosses the membrane as a helical span at residues 283-302 (WISITEALAFFHCCLNPILY). Over 303 to 352 (AFLGAKFKTSAQHALTSVSRGSSLKILSKGKRGGHSSVSTESESSSFHSS) the chain is Cytoplasmic. Phosphoserine is present on residues S319 and S321. 2 positions are modified to phosphoserine; by PKC and GRK6: S324 and S325. The tract at residues 329–352 (LSKGKRGGHSSVSTESESSSFHSS) is disordered. S330 bears the Phosphoserine; by GRK6 mark. Residue K331 forms a Glycyl lysine isopeptide (Lys-Gly) (interchain with G-Cter in ubiquitin) linkage. Residues 337-352 (HSSVSTESESSSFHSS) show a composition bias toward low complexity. Position 339 is a phosphoserine; by GRK6 (S339). Phosphoserine occurs at positions 348 and 351.

Belongs to the G-protein coupled receptor 1 family. In terms of assembly, monomer. Can form homodimers. Interacts with CD164. Interacts with ARRB2; the interaction is dependent on the C-terminal phosphorylation of CXCR4 and allows activation of MAPK1 and MAPK3. Interacts with ARR3; the interaction is dependent on the C-terminal phosphorylation of CXCR4 and modulates calcium mobilization. Interacts with RNF113A; the interaction, enhanced by CXCL12, promotes CXCR4 ubiquitination and subsequent degradation. Interacts (via the cytoplasmic C-terminal) with ITCH (via the WW domains I and II); the interaction, enhanced by CXCL12, promotes CXCR4 ubiquitination and leads to its degradation. Interacts with extracellular ubiquitin. Interacts with DBN1; this interaction is enhanced by antigenic stimulation. Following LPS binding, may form a complex with GDF5, HSP90AA1 and HSPA8. In terms of processing, phosphorylated on agonist stimulation. Rapidly phosphorylated on serine and threonine residues in the C-terminal. Phosphorylation at Ser-324 and Ser-325 leads to recruitment of ITCH, ubiquitination and protein degradation. Ubiquitinated after ligand binding, leading to its degradation. Ubiquitinated by ITCH at the cell membrane on agonist stimulation. The ubiquitin-dependent mechanism, endosomal sorting complex required for transport (ESCRT), then targets CXCR4 for lysosomal degradation. This process is dependent also on prior Ser-/Thr-phosphorylation in the C-terminal of CXCR4. Also binding of ARRB1 to STAM negatively regulates CXCR4 sorting to lysosomes though modulating ubiquitination of SFR5S. Post-translationally, sulfation is required for efficient binding of CXCL12/SDF-1alpha and promotes its dimerization. In terms of processing, O- and N-glycosylated. N-glycosylation can mask coreceptor function. The O-glycosylation chondroitin sulfate attachment does not affect interaction with CXCL12/SDF-1alpha nor its coreceptor activity.

Its subcellular location is the cell membrane. The protein resides in the cell junction. It is found in the early endosome. The protein localises to the late endosome. It localises to the lysosome. Its function is as follows. Receptor for the C-X-C chemokine CXCL12/SDF-1 that transduces a signal by increasing intracellular calcium ion levels and enhancing MAPK1/MAPK3 activation. Involved in the AKT signaling cascade. Plays a role in regulation of cell migration, e.g. during wound healing. Acts as a receptor for extracellular ubiquitin; leading to enhanced intracellular calcium ions and reduced cellular cAMP levels. Binds bacterial lipopolysaccharide (LPS) et mediates LPS-induced inflammatory response, including TNF secretion by monocytes. Involved in hematopoiesis and in cardiac ventricular septum formation. Also plays an essential role in vascularization of the gastrointestinal tract, probably by regulating vascular branching and/or remodeling processes in endothelial cells. Involved in cerebellar development. In the CNS, could mediate hippocampal-neuron survival. The protein is C-X-C chemokine receptor type 4 (CXCR4) of Macaca mulatta (Rhesus macaque).